A 487-amino-acid polypeptide reads, in one-letter code: NADH-quinone oxidoreductase subunit N (487 aa).

Helical transmembrane passes span 16-36 (VIMP…VNVF), 45-65 (LAWL…TGWG), 79-99 (NFAI…VLIS), 111-131 (GELY…AAAT), 133-153 (LMTI…LAGF), 168-188 (FLLG…IYGV), 212-232 (LLIG…AAPF), 257-276 (AAGF…AMIA), 281-298 (LLWI…FTAL), 306-326 (MLAY…ASGT), 333-353 (ILFY…VIVL), 378-398 (ALAM…AGFI), 413-435 (IWLA…RVIV), and 457-477 (LALV…SMIL).

This sequence belongs to the complex I subunit 2 family. In terms of assembly, NDH-1 is composed of 14 different subunits. Subunits NuoA, H, J, K, L, M, N constitute the membrane sector of the complex.

It is found in the cell inner membrane. The catalysed reaction is a quinone + NADH + 5 H(+)(in) = a quinol + NAD(+) + 4 H(+)(out). In terms of biological role, NDH-1 shuttles electrons from NADH, via FMN and iron-sulfur (Fe-S) centers, to quinones in the respiratory chain. The immediate electron acceptor for the enzyme in this species is believed to be ubiquinone. Couples the redox reaction to proton translocation (for every two electrons transferred, four hydrogen ions are translocated across the cytoplasmic membrane), and thus conserves the redox energy in a proton gradient. The polypeptide is NADH-quinone oxidoreductase subunit N (Trichlorobacter lovleyi (strain ATCC BAA-1151 / DSM 17278 / SZ) (Geobacter lovleyi)).